Here is a 345-residue protein sequence, read N- to C-terminus: Anthranilate phosphoribosyltransferase (345 aa).

Residues Gly-87, 90 to 91 (GD), Thr-95, 97 to 100 (NAST), 115 to 123 (KHGNRSFSS), and Ser-127 each bind 5-phospho-alpha-D-ribose 1-diphosphate. Gly-87 serves as a coordination point for anthranilate. Position 99 (Ser-99) interacts with Mg(2+). Residue Asn-118 coordinates anthranilate. Arg-173 contributes to the anthranilate binding site. Mg(2+) is bound by residues Asp-232 and Glu-233.

The protein belongs to the anthranilate phosphoribosyltransferase family. In terms of assembly, homodimer. The cofactor is Mg(2+).

It catalyses the reaction N-(5-phospho-beta-D-ribosyl)anthranilate + diphosphate = 5-phospho-alpha-D-ribose 1-diphosphate + anthranilate. The protein operates within amino-acid biosynthesis; L-tryptophan biosynthesis; L-tryptophan from chorismate: step 2/5. In terms of biological role, catalyzes the transfer of the phosphoribosyl group of 5-phosphorylribose-1-pyrophosphate (PRPP) to anthranilate to yield N-(5'-phosphoribosyl)-anthranilate (PRA). The protein is Anthranilate phosphoribosyltransferase of Aeropyrum pernix (strain ATCC 700893 / DSM 11879 / JCM 9820 / NBRC 100138 / K1).